The chain runs to 613 residues: DNA mismatch repair protein MutL (613 aa).

This sequence belongs to the DNA mismatch repair MutL/HexB family.

In terms of biological role, this protein is involved in the repair of mismatches in DNA. It is required for dam-dependent methyl-directed DNA mismatch repair. May act as a 'molecular matchmaker', a protein that promotes the formation of a stable complex between two or more DNA-binding proteins in an ATP-dependent manner without itself being part of a final effector complex. This chain is DNA mismatch repair protein MutL, found in Flavobacterium psychrophilum (strain ATCC 49511 / DSM 21280 / CIP 103535 / JIP02/86).